Here is a 370-residue protein sequence, read N- to C-terminus: Protein SHI RELATED SEQUENCE 1 (370 aa).

The segment at 1–37 (MAGFFSLDGGGGGGGGGGNNQEDHRSNTNPPPPVSEA) is disordered. The span at 8–19 (DGGGGGGGGGGN) shows a compositional bias: gly residues. Zn(2+) is bound by residues Cys-144, Cys-147, Cys-155, Cys-160, Cys-164, and Cys-171. The zn(2)-C6 fungal-type; degenerate DNA-binding region spans 144–171 (CQDCGNQAKKDCSHMRCRTCCKSRGFEC). Residues 271-274 (IGGH) carry the Required for homo- and heterodimerization motif.

It belongs to the SHI protein family. As to quaternary structure, forms homodimers and heterodimers with LRP1. As to expression, expressed in flowers, seeds and seedlings.

It is found in the nucleus. Its function is as follows. Transcription activator that binds DNA on 5'-ACTCTAC-3' and promotes auxin homeostasis-regulating gene expression (e.g. YUC genes), as well as genes affecting stamen development, cell expansion and timing of flowering. Synergistically with other SHI-related proteins, regulates gynoecium, stamen and leaf development in a dose-dependent manner, controlling apical-basal patterning. Promotes style and stigma formation, and influences vascular development during gynoecium development. May also have a role in the formation and/or maintenance of the shoot apical meristem (SAM). In Arabidopsis thaliana (Mouse-ear cress), this protein is Protein SHI RELATED SEQUENCE 1 (SRS1).